The sequence spans 1247 residues: DNA-directed RNA polymerase subunit beta (1247 aa).

The protein belongs to the RNA polymerase beta chain family. In terms of assembly, in plastids the minimal PEP RNA polymerase catalytic core is composed of four subunits: alpha, beta, beta', and beta''. When a (nuclear-encoded) sigma factor is associated with the core the holoenzyme is formed, which can initiate transcription.

Its subcellular location is the plastid. The catalysed reaction is RNA(n) + a ribonucleoside 5'-triphosphate = RNA(n+1) + diphosphate. DNA-dependent RNA polymerase catalyzes the transcription of DNA into RNA using the four ribonucleoside triphosphates as substrates. In Helicosporidium sp. subsp. Simulium jonesii (Green alga), this protein is DNA-directed RNA polymerase subunit beta (rpoB).